Here is a 194-residue protein sequence, read N- to C-terminus: RNA polymerase II subunit A C-terminal domain phosphatase SSU72 like protein 5 (194 aa).

Belongs to the SSU72 phosphatase family.

It is found in the nucleus. The enzyme catalyses O-phospho-L-seryl-[protein] + H2O = L-seryl-[protein] + phosphate. The catalysed reaction is O-phospho-L-threonyl-[protein] + H2O = L-threonyl-[protein] + phosphate. Protein phosphatase that catalyzes the dephosphorylation of the C-terminal domain of RNA polymerase II. Plays a role in RNA processing and termination. The protein is RNA polymerase II subunit A C-terminal domain phosphatase SSU72 like protein 5 of Homo sapiens (Human).